The chain runs to 356 residues: Tetraacyldisaccharide 4'-kinase (356 aa).

67-74 (FVGGTGKT) is an ATP binding site.

Belongs to the LpxK family.

The enzyme catalyses a lipid A disaccharide + ATP = a lipid IVA + ADP + H(+). The protein operates within glycolipid biosynthesis; lipid IV(A) biosynthesis; lipid IV(A) from (3R)-3-hydroxytetradecanoyl-[acyl-carrier-protein] and UDP-N-acetyl-alpha-D-glucosamine: step 6/6. Transfers the gamma-phosphate of ATP to the 4'-position of a tetraacyldisaccharide 1-phosphate intermediate (termed DS-1-P) to form tetraacyldisaccharide 1,4'-bis-phosphate (lipid IVA). This is Tetraacyldisaccharide 4'-kinase from Herminiimonas arsenicoxydans.